The primary structure comprises 34 residues: Photosystem II reaction center protein M (34 aa).

Residues Ile5 to Ile25 form a helical membrane-spanning segment.

The protein belongs to the PsbM family. In terms of assembly, PSII is composed of 1 copy each of membrane proteins PsbA, PsbB, PsbC, PsbD, PsbE, PsbF, PsbH, PsbI, PsbJ, PsbK, PsbL, PsbM, PsbT, PsbX, PsbY, PsbZ, Psb30/Ycf12, at least 3 peripheral proteins of the oxygen-evolving complex and a large number of cofactors. It forms dimeric complexes.

The protein localises to the plastid. It localises to the chloroplast thylakoid membrane. In terms of biological role, one of the components of the core complex of photosystem II (PSII). PSII is a light-driven water:plastoquinone oxidoreductase that uses light energy to abstract electrons from H(2)O, generating O(2) and a proton gradient subsequently used for ATP formation. It consists of a core antenna complex that captures photons, and an electron transfer chain that converts photonic excitation into a charge separation. This subunit is found at the monomer-monomer interface. The protein is Photosystem II reaction center protein M of Cycas taitungensis (Prince sago).